Here is a 205-residue protein sequence, read N- to C-terminus: Methylthioribulose-1-phosphate dehydratase (205 aa).

Zn(2+) is bound by residues histidine 96 and histidine 98.

This sequence belongs to the aldolase class II family. MtnB subfamily. The cofactor is Zn(2+).

It carries out the reaction 5-(methylsulfanyl)-D-ribulose 1-phosphate = 5-methylsulfanyl-2,3-dioxopentyl phosphate + H2O. It functions in the pathway amino-acid biosynthesis; L-methionine biosynthesis via salvage pathway; L-methionine from S-methyl-5-thio-alpha-D-ribose 1-phosphate: step 2/6. Its function is as follows. Catalyzes the dehydration of methylthioribulose-1-phosphate (MTRu-1-P) into 2,3-diketo-5-methylthiopentyl-1-phosphate (DK-MTP-1-P). This chain is Methylthioribulose-1-phosphate dehydratase, found in Pseudomonas aeruginosa (strain ATCC 15692 / DSM 22644 / CIP 104116 / JCM 14847 / LMG 12228 / 1C / PRS 101 / PAO1).